The following is a 187-amino-acid chain: Probable nicotinate-nucleotide adenylyltransferase (187 aa).

It belongs to the NadD family.

It carries out the reaction nicotinate beta-D-ribonucleotide + ATP + H(+) = deamido-NAD(+) + diphosphate. The protein operates within cofactor biosynthesis; NAD(+) biosynthesis; deamido-NAD(+) from nicotinate D-ribonucleotide: step 1/1. Functionally, catalyzes the reversible adenylation of nicotinate mononucleotide (NaMN) to nicotinic acid adenine dinucleotide (NaAD). In Anaeromyxobacter dehalogenans (strain 2CP-1 / ATCC BAA-258), this protein is Probable nicotinate-nucleotide adenylyltransferase.